Reading from the N-terminus, the 352-residue chain is C-C chemokine receptor type 5 (352 aa).

Topologically, residues 1-30 (MDYQVSSPIYDINYYTSEPCQKINVKQIAA) are extracellular. Tyrosine 3 carries the sulfotyrosine modification. O-linked (GalNAc...) serine glycosylation is found at serine 6 and serine 7. A sulfotyrosine mark is found at tyrosine 10, tyrosine 14, and tyrosine 15. 2 disulfide bridges follow: cysteine 20–cysteine 269 and cysteine 101–cysteine 178. A helical membrane pass occupies residues 31-58 (RLLPPLYSLVFIFGFVGNMLVILILINC). At 59–68 (KRLKSMTDIY) the chain is on the cytoplasmic side. Residues 69–89 (LLNLAISDLFFLLTVPFWAHY) traverse the membrane as a helical segment. The Extracellular portion of the chain corresponds to 90–102 (AAAQWDFGNTMCQ). Residues 103–124 (LLTGLYFIGFFSGIFFIILLTI) traverse the membrane as a helical segment. The Cytoplasmic portion of the chain corresponds to 125 to 141 (DRYLAVVHAVFALKART). Residues 142–166 (VTFGVVTSVITWVVAVFASLPGIIF) form a helical membrane-spanning segment. At 167–198 (TRSQKEGLHYTCSSHFPYSQYQFWKNFQTLKI) the chain is on the extracellular side. The chain crosses the membrane as a helical span at residues 199-218 (VILGLVLPLLVMVICYSGIL). At 219-235 (KTLLRCRNEKKRHRAVR) the chain is on the cytoplasmic side. Residues 236–260 (LIFTIMIVYFLFWAPYNIVLLLNTF) form a helical membrane-spanning segment. Over 261–277 (QEFFGLNNCSSSNRLDQ) the chain is Extracellular. A helical transmembrane segment spans residues 278–301 (AMQVTETLGMTHCCINPIIYAFVG). At 302-352 (EKFRNYLLVFFQKHIAKRFCKCCSIFQQEAPERASSVYTRSTGEQEISVGL) the chain is on the cytoplasmic side. S-palmitoyl cysteine attachment occurs at residues cysteine 321, cysteine 323, and cysteine 324. 4 positions are modified to phosphoserine; by BARK1: serine 336, serine 337, serine 342, and serine 349.

Belongs to the G-protein coupled receptor 1 family. As to quaternary structure, interacts with PRAF2. Efficient ligand binding to CCL3/MIP-1alpha and CCL4/MIP-1beta requires sulfation, O-glycosylation and sialic acid modifications. Glycosylation on Ser-6 is required for efficient binding of CCL4. Interacts with GRK2. Interacts with ARRB1 and ARRB2. Interacts with CNIH4. Interacts with S100A4; this interaction stimulates T-lymphocyte chemotaxis. In terms of assembly, (Microbial infection) Interacts with HIV-1 surface protein gp120. (Microbial infection) May interact with human cytomegalovirus/HHV-5 protein UL78. Post-translationally, sulfated on at least 2 of the N-terminal tyrosines. Sulfation contributes to the efficiency of HIV-1 entry and is required for efficient binding of the chemokines, CCL3 and CCL4. In terms of processing, O-glycosylated, but not N-glycosylated. Ser-6 appears to be the major site even if Ser-7 may be also O-glycosylated. Also sialylated glycans present which contribute to chemokine binding. Thr-16 and Ser-17 may also be glycosylated and, if so, with small moieties such as a T-antigen. Palmitoylation in the C-terminal is important for cell surface expression, and to a lesser extent, for HIV entry. Post-translationally, phosphorylation on serine residues in the C-terminal is stimulated by binding CC chemokines especially by APO-RANTES. As to expression, highly expressed in spleen, thymus, in the myeloid cell line THP-1, in the promyeloblastic cell line KG-1a and on CD4+ and CD8+ T-cells. Medium levels in peripheral blood leukocytes and in small intestine. Low levels in ovary and lung.

Its subcellular location is the cell membrane. Its function is as follows. Receptor for a number of inflammatory CC-chemokines including CCL3/MIP-1-alpha, CCL4/MIP-1-beta and RANTES and subsequently transduces a signal by increasing the intracellular calcium ion level. May play a role in the control of granulocytic lineage proliferation or differentiation. Participates in T-lymphocyte migration to the infection site by acting as a chemotactic receptor. (Microbial infection) Acts as a coreceptor (CD4 being the primary receptor) of human immunodeficiency virus-1/HIV-1. This chain is C-C chemokine receptor type 5, found in Homo sapiens (Human).